Here is a 702-residue protein sequence, read N- to C-terminus: Ribosomal RNA large subunit methyltransferase K/L (702 aa).

One can recognise a THUMP domain in the interval 43 to 154 (LIYQSLMWSR…KETASIALDL (112 aa)).

The protein belongs to the methyltransferase superfamily. RlmKL family.

It localises to the cytoplasm. The catalysed reaction is guanosine(2445) in 23S rRNA + S-adenosyl-L-methionine = N(2)-methylguanosine(2445) in 23S rRNA + S-adenosyl-L-homocysteine + H(+). The enzyme catalyses guanosine(2069) in 23S rRNA + S-adenosyl-L-methionine = N(2)-methylguanosine(2069) in 23S rRNA + S-adenosyl-L-homocysteine + H(+). In terms of biological role, specifically methylates the guanine in position 2445 (m2G2445) and the guanine in position 2069 (m7G2069) of 23S rRNA. This chain is Ribosomal RNA large subunit methyltransferase K/L, found in Salmonella paratyphi B (strain ATCC BAA-1250 / SPB7).